The chain runs to 656 residues: Fidgetin-like protein 1 (656 aa).

The span at 293–302 shows a compositional bias: polar residues; that stretch reads KYSNQPQRNP. Residues 293 to 354 are disordered; sequence KYSNQPQRNP…QGNSEMNAPS (62 aa). Residues 331 to 340 are compositionally biased toward basic and acidic residues; that stretch reads RQEDVQDSNR. ATP contacts are provided by residues Ala-386 and 426 to 431; that span reads GTGKTL.

The protein belongs to the AAA ATPase family. As to quaternary structure, hexamer. It depends on Mg(2+) as a cofactor.

It is found in the nucleus. The protein resides in the cytoplasm. It localises to the perinuclear region. It catalyses the reaction ATP + H2O = ADP + phosphate + H(+). Functionally, may be involved in DNA double-strand break (DBS) repair via homologous recombination (HR). May regulate osteoblast proliferation and differentiation. This Xenopus tropicalis (Western clawed frog) protein is Fidgetin-like protein 1 (fignl1).